The chain runs to 647 residues: Acetyl-coenzyme A synthetase (647 aa).

Residues 189–192 (RGGK), threonine 307, and asparagine 331 each bind CoA. ATP contacts are provided by residues 383–385 (GEP), 407–412 (DTWWQT), aspartate 496, and arginine 511. Serine 519 serves as a coordination point for CoA. Arginine 522 lines the ATP pocket. Mg(2+) is bound by residues histidine 535 and valine 538. Arginine 580 is a CoA binding site. Residue lysine 605 is modified to N6-acetyllysine.

This sequence belongs to the ATP-dependent AMP-binding enzyme family. It depends on Mg(2+) as a cofactor. Acetylated. Deacetylation by the SIR2-homolog deacetylase activates the enzyme.

It catalyses the reaction acetate + ATP + CoA = acetyl-CoA + AMP + diphosphate. Catalyzes the conversion of acetate into acetyl-CoA (AcCoA), an essential intermediate at the junction of anabolic and catabolic pathways. AcsA undergoes a two-step reaction. In the first half reaction, AcsA combines acetate with ATP to form acetyl-adenylate (AcAMP) intermediate. In the second half reaction, it can then transfer the acetyl group from AcAMP to the sulfhydryl group of CoA, forming the product AcCoA. The sequence is that of Acetyl-coenzyme A synthetase from Syntrophus aciditrophicus (strain SB).